Consider the following 524-residue polypeptide: REH2-associated factor 1 (524 aa).

The N-terminal 22 residues, 1–22 (MRRWLVASMAPQLHQLLQPVRR), are a transit peptide targeting the mitochondrion. A C2H2-type 1; atypical zinc finger spans residues 48 to 70 (ASCPACSRVVHMCDMLTHLITAH). Residues 121-147 (YMCNWCDRRSDVYATRDKFLKHVADVH) form a C2H2-type 2; atypical zinc finger. A C2H2-type 4 zinc finger spans residues 226–249 (FPCELCNRTFNSEIDLLQHLETRH). A C2H2-type 3; atypical zinc finger spans residues 286 to 312 (VICDLCVSSSKVYKMPSALFSHIRFKH). C2H2-type zinc fingers lie at residues 334–357 (FVCT…NSKH), 376–399 (WWCH…QNKH), 406–429 (HPCP…SLQH), and 443–465 (VKCS…AVKH). The tract at residues 463-524 (VKHHKKDPRA…KTTEVSEVTS (62 aa)) is disordered. Over residues 479-500 (APTSASHVAASTSAAVPSEVEA) the composition is skewed to low complexity.

Component of the REH2-associated complex (REH2C) composed of helicase REH2, associated factors H2F1 and H2F2, and mRNAs at various editing stages; the formation of the complex is RNA-independent. Within the complex, interacts with REH2; the interaction is direct. Interacts with various editing complexes including the RNA editing core (RECC) complex, the gRNA-binding (GRBC) complex (also known as the MRB1 complex) and the RNA editing mediator (REMC) complex.

The protein resides in the mitochondrion. Plays an important role in mitochondrial mRNA editing by promoting the assembly of the mRNA editosome. Facilitates the recruitment of mRNA to the REH2C complex and promotes the interaction between various editing complexes including REH2C, GRBC, REMC and RECC complexes. This Trypanosoma brucei brucei (strain 927/4 GUTat10.1) protein is REH2-associated factor 1.